Consider the following 429-residue polypeptide: 3-phosphoshikimate 1-carboxyvinyltransferase (429 aa).

Positions 11, 12, and 16 each coordinate 3-phosphoshikimate. Phosphoenolpyruvate is bound at residue lysine 11. Phosphoenolpyruvate is bound by residues glycine 82 and arginine 110. Positions 155, 157, 302, and 329 each coordinate 3-phosphoshikimate. Phosphoenolpyruvate is bound at residue glutamine 157. The Proton acceptor role is filled by aspartate 302. Positions 333 and 385 each coordinate phosphoenolpyruvate.

Belongs to the EPSP synthase family. Monomer.

It is found in the cytoplasm. It catalyses the reaction 3-phosphoshikimate + phosphoenolpyruvate = 5-O-(1-carboxyvinyl)-3-phosphoshikimate + phosphate. It participates in metabolic intermediate biosynthesis; chorismate biosynthesis; chorismate from D-erythrose 4-phosphate and phosphoenolpyruvate: step 6/7. In terms of biological role, catalyzes the transfer of the enolpyruvyl moiety of phosphoenolpyruvate (PEP) to the 5-hydroxyl of shikimate-3-phosphate (S3P) to produce enolpyruvyl shikimate-3-phosphate and inorganic phosphate. This chain is 3-phosphoshikimate 1-carboxyvinyltransferase, found in Helicobacter pylori (strain J99 / ATCC 700824) (Campylobacter pylori J99).